Here is a 145-residue protein sequence, read N- to C-terminus: MAKKITGYIRLQIKAGEANPSPPVGPALGQHGVNIREFCESFNTATKNIEKGLPTPVIITVYADRTFSFITKTPPASVLLKKFVLKGKSGSARPNTEKVGKATRQQLEEIAKMKTPDLTAADLEAAIRTIAGTARSMGIDVEGVE.

Belongs to the universal ribosomal protein uL11 family. As to quaternary structure, part of the ribosomal stalk of the 50S ribosomal subunit. Interacts with L10 and the large rRNA to form the base of the stalk. L10 forms an elongated spine to which L12 dimers bind in a sequential fashion forming a multimeric L10(L12)X complex. In terms of processing, one or more lysine residues are methylated.

Its function is as follows. Forms part of the ribosomal stalk which helps the ribosome interact with GTP-bound translation factors. This chain is Large ribosomal subunit protein uL11, found in Coxiella burnetii (strain CbuK_Q154) (Coxiella burnetii (strain Q154)).